A 491-amino-acid polypeptide reads, in one-letter code: 2,3-bisphosphoglycerate-independent phosphoglycerate mutase (491 aa).

Residues Asp-11 and Ser-61 each coordinate Mn(2+). Ser-61 serves as the catalytic Phosphoserine intermediate. Substrate contacts are provided by residues His-118, 147–148 (RD), Arg-177, Arg-183, 247–250 (RNDR), and Lys-320. Positions 386, 390, 427, 428, and 445 each coordinate Mn(2+).

Belongs to the BPG-independent phosphoglycerate mutase family. Monomer. Requires Mn(2+) as cofactor.

The catalysed reaction is (2R)-2-phosphoglycerate = (2R)-3-phosphoglycerate. The protein operates within carbohydrate degradation; glycolysis; pyruvate from D-glyceraldehyde 3-phosphate: step 3/5. Catalyzes the interconversion of 2-phosphoglycerate and 3-phosphoglycerate. This Helicobacter pylori (strain ATCC 700392 / 26695) (Campylobacter pylori) protein is 2,3-bisphosphoglycerate-independent phosphoglycerate mutase.